Here is a 183-residue protein sequence, read N- to C-terminus: Isopentenyl-diphosphate Delta-isomerase (183 aa).

The Mn(2+) site is built by histidine 26 and histidine 33. Residues 31 to 165 (SLHLAFSSWL…PWAFSPWMVS (135 aa)) form the Nudix hydrolase domain. Residue cysteine 68 is part of the active site. Histidine 70 contacts Mn(2+). Residue glutamate 88 coordinates Mg(2+). The Mn(2+) site is built by glutamate 115 and glutamate 117. The active site involves glutamate 117.

Belongs to the IPP isomerase type 1 family. Homodimer. Mg(2+) is required as a cofactor. Mn(2+) serves as cofactor.

It is found in the cytoplasm. It carries out the reaction isopentenyl diphosphate = dimethylallyl diphosphate. It functions in the pathway isoprenoid biosynthesis; dimethylallyl diphosphate biosynthesis; dimethylallyl diphosphate from isopentenyl diphosphate: step 1/1. Functionally, catalyzes the 1,3-allylic rearrangement of the homoallylic substrate isopentenyl (IPP) to its highly electrophilic allylic isomer, dimethylallyl diphosphate (DMAPP). This is Isopentenyl-diphosphate Delta-isomerase from Enterobacter sp. (strain 638).